We begin with the raw amino-acid sequence, 390 residues long: Chorismate synthase 1 (390 aa).

Residues Arg39 and Arg45 each coordinate NADP(+). FMN-binding positions include 132 to 134, 253 to 254, Gly298, 313 to 317, and Arg339; these read RSS, NA, and KPIPT.

This sequence belongs to the chorismate synthase family. Homotetramer. It depends on FMNH2 as a cofactor.

It carries out the reaction 5-O-(1-carboxyvinyl)-3-phosphoshikimate = chorismate + phosphate. It functions in the pathway metabolic intermediate biosynthesis; chorismate biosynthesis; chorismate from D-erythrose 4-phosphate and phosphoenolpyruvate: step 7/7. Functionally, catalyzes the anti-1,4-elimination of the C-3 phosphate and the C-6 proR hydrogen from 5-enolpyruvylshikimate-3-phosphate (EPSP) to yield chorismate, which is the branch point compound that serves as the starting substrate for the three terminal pathways of aromatic amino acid biosynthesis. This reaction introduces a second double bond into the aromatic ring system. The protein is Chorismate synthase 1 of Bacillus anthracis.